The primary structure comprises 345 residues: tRNA dimethylallyltransferase (345 aa).

9–16 (GPTASGKS) provides a ligand contact to ATP. 11–16 (TASGKS) is a binding site for substrate. Interaction with substrate tRNA regions lie at residues 34–37 (DSMQ) and 195–199 (QRMIR).

The protein belongs to the IPP transferase family. In terms of assembly, monomer. The cofactor is Mg(2+).

It carries out the reaction adenosine(37) in tRNA + dimethylallyl diphosphate = N(6)-dimethylallyladenosine(37) in tRNA + diphosphate. Functionally, catalyzes the transfer of a dimethylallyl group onto the adenine at position 37 in tRNAs that read codons beginning with uridine, leading to the formation of N6-(dimethylallyl)adenosine (i(6)A). This is tRNA dimethylallyltransferase from Orientia tsutsugamushi (strain Ikeda) (Rickettsia tsutsugamushi).